A 414-amino-acid polypeptide reads, in one-letter code: Mu-like prophage FluMu F protein (414 aa).

To phage Mu protein F.

Involved in virion morphogenesis. This chain is Mu-like prophage FluMu F protein, found in Haemophilus influenzae (strain ATCC 51907 / DSM 11121 / KW20 / Rd).